Here is an 88-residue protein sequence, read N- to C-terminus: Small ribosomal subunit protein bS20 (88 aa).

A disordered region spans residues 1-20 (MANTKSARKSLIKSKQQRKC).

Belongs to the bacterial ribosomal protein bS20 family.

Binds directly to 16S ribosomal RNA. The polypeptide is Small ribosomal subunit protein bS20 (Blochmanniella pennsylvanica (strain BPEN)).